We begin with the raw amino-acid sequence, 741 residues long: Mitofusin-1 (741 aa).

Topologically, residues 1 to 584 are cytoplasmic; that stretch reads MAETVSPLKH…AAQEELMITL (584 aa). The part of a helix bundle domain, formed by helices from N-terminal and C-terminal regions stretch occupies residues 9 to 73; sequence KHFVLAKKAI…LAVIGEVLSR (65 aa). The 250-residue stretch at 72–321 folds into the Dynamin-type G domain; the sequence is SRRHMKVAFF…ARLQEFQNFE (250 aa). The interval 82–89 is G1 motif; the sequence is GRTSSGKS. Position 85-90 (85-90) interacts with GTP; sequence SSGKSS. The G2 motif stretch occupies residues 108-109; that stretch reads TT. The G3 motif stretch occupies residues 178–181; the sequence is DSPG. 237 to 240 serves as a coordination point for GTP; it reads NRWD. Residues 237 to 240 are G4 motif; the sequence is NRWD. A region of interest (G5 motif) is located at residue glutamate 266. GTP-binding residues include serine 284 and lysine 286. The interval 338–364 is part of a helix bundle domain, formed by helices from N-terminal and C-terminal regions; sequence EQHTIRAKQILDTVKNILDSVNVAAAE. Positions 371 to 408 form a coiled coil; sequence EEREDQIDRLDFIRNQMNLLTLDVKKKIKEVTEEVANK. Residues 585 to 605 traverse the membrane as a helical segment; the sequence is ITGLASLTSRTSMGIIVVGGV. The Mitochondrial intermembrane segment spans residues 606–608; the sequence is IWK. The chain crosses the membrane as a helical span at residues 609 to 629; sequence TVGWKLISVTLSMYGALYLYE. The Cytoplasmic segment spans residues 630–741; the sequence is RLTWTTRAKE…QFLHPSSGES (112 aa). Residues 677 to 735 are a coiled coil; that stretch reads FARLCQQVDVTQKHLEEEIARLSKEIDQLEKIQNNSKLLRNKAVQLESELENFSKQFLH. The interval 703–734 is part of a helix bundle domain, formed by helices from N-terminal and C-terminal regions; the sequence is DQLEKIQNNSKLLRNKAVQLESELENFSKQFL.

This sequence belongs to the TRAFAC class dynamin-like GTPase superfamily. Dynamin/Fzo/YdjA family. Mitofusin subfamily. In terms of assembly, homodimer, also in the absence of bound GTP. Forms higher oligomers in the presence of a transition state GTP analog. Forms homomultimers and heteromultimers with MFN2. Oligomerization is essential for mitochondrion fusion. Component of a high molecular weight multiprotein complex. Interacts with VAT1. Interacts with THG1L; THG1L probably functions as a guanyl-nucleotide exchange factor/GEF, activating MFN1. In terms of processing, ubiquitinated by MARCHF5. When mitochondria are depolarized and dysfunctional, it is ubiquitinated by a SCF (SKP1-CUL1-F-box protein) E3 ubiquitin-protein ligase complex that contains FBXO7 and PRKN. Ubiquitinated by non-degradative ubiquitin by PRKN, promoting mitochondrial fusion; deubiquitination by USP30 inhibits mitochondrial fusion. Detected in adult heart. Detected in embryos (at protein level). Widely expressed.

It localises to the mitochondrion outer membrane. It carries out the reaction GTP + H2O = GDP + phosphate + H(+). Its function is as follows. Mitochondrial outer membrane GTPase that mediates mitochondrial clustering and fusion. Membrane clustering requires GTPase activity. It may involve a major rearrangement of the coiled coil domains. Mitochondria are highly dynamic organelles, and their morphology is determined by the equilibrium between mitochondrial fusion and fission events. Overexpression induces the formation of mitochondrial networks (in vitro). Has low GTPase activity. In Mus musculus (Mouse), this protein is Mitofusin-1 (Mfn1).